Here is a 498-residue protein sequence, read N- to C-terminus: Glycerol kinase (498 aa).

An ADP-binding site is contributed by threonine 12. 3 residues coordinate ATP: threonine 12, threonine 13, and serine 14. Threonine 12 is a sn-glycerol 3-phosphate binding site. Position 16 (arginine 16) interacts with ADP. Residues arginine 82, glutamate 83, tyrosine 135, and aspartate 245 each coordinate sn-glycerol 3-phosphate. The glycerol site is built by arginine 82, glutamate 83, tyrosine 135, aspartate 245, and glutamine 246. Residues threonine 267 and glycine 310 each contribute to the ADP site. Positions 267, 310, 314, and 411 each coordinate ATP. Residues glycine 411 and asparagine 415 each contribute to the ADP site.

Belongs to the FGGY kinase family. Homotetramer and homodimer (in equilibrium).

It catalyses the reaction glycerol + ATP = sn-glycerol 3-phosphate + ADP + H(+). It functions in the pathway polyol metabolism; glycerol degradation via glycerol kinase pathway; sn-glycerol 3-phosphate from glycerol: step 1/1. Activated by phosphorylation and inhibited by fructose 1,6-bisphosphate (FBP). Functionally, key enzyme in the regulation of glycerol uptake and metabolism. Catalyzes the phosphorylation of glycerol to yield sn-glycerol 3-phosphate. The sequence is that of Glycerol kinase from Clostridium botulinum (strain Eklund 17B / Type B).